We begin with the raw amino-acid sequence, 517 residues long: L-amino-acid oxidase (517 aa).

The first 19 residues, 1–19, serve as a signal peptide directing secretion; it reads MNVFSIFSLVFLAAFGSCA. The cysteines at positions 29 and 192 are disulfide-linked. FAD contacts are provided by residues 62-63, 82-83, R90, and 106-109; these read MA, EA, and GPMR. R109 contacts substrate. N191 carries an N-linked (GlcNAc...) asparagine glycan. Residue V280 coordinates FAD. A disulfide bridge connects residues C350 and C431. The N-linked (GlcNAc...) asparagine glycan is linked to N380. A substrate-binding site is contributed by Y391. FAD is bound by residues E476 and 483 to 488; that span reads GWLDST. Substrate is bound at residue 483–484; the sequence is GW.

The protein belongs to the flavin monoamine oxidase family. FIG1 subfamily. As to quaternary structure, monomer. This is in contrast with most of its orthologs, that are non-covalently linked homodimers. FAD serves as cofactor. Post-translationally, N-glycosylated. As to expression, expressed by the venom gland.

It localises to the secreted. It carries out the reaction an L-alpha-amino acid + O2 + H2O = a 2-oxocarboxylate + H2O2 + NH4(+). It catalyses the reaction L-leucine + O2 + H2O = 4-methyl-2-oxopentanoate + H2O2 + NH4(+). The enzyme catalyses L-phenylalanine + O2 + H2O = 3-phenylpyruvate + H2O2 + NH4(+). The catalysed reaction is L-tryptophan + O2 + H2O = indole-3-pyruvate + H2O2 + NH4(+). It carries out the reaction L-methionine + O2 + H2O = 4-methylsulfanyl-2-oxobutanoate + H2O2 + NH4(+). It catalyses the reaction L-isoleucine + O2 + H2O = (S)-3-methyl-2-oxopentanoate + H2O2 + NH4(+). The enzyme catalyses L-arginine + O2 + H2O = 5-guanidino-2-oxopentanoate + H2O2 + NH4(+). The catalysed reaction is L-aspartate + O2 + H2O = oxaloacetate + H2O2 + NH4(+). It carries out the reaction L-histidine + O2 + H2O = 3-(imidazol-5-yl)pyruvate + H2O2 + NH4(+). It catalyses the reaction L-asparagine + O2 + H2O = 2-oxosuccinamate + H2O2 + NH4(+). The enzyme catalyses L-tyrosine + O2 + H2O = 3-(4-hydroxyphenyl)pyruvate + H2O2 + NH4(+). The catalysed reaction is L-glutamine + O2 + H2O = 2-oxoglutaramate + H2O2 + NH4(+). It carries out the reaction L-alanine + O2 + H2O = pyruvate + H2O2 + NH4(+). It catalyses the reaction L-lysine + O2 + H2O = 6-amino-2-oxohexanoate + H2O2 + NH4(+). The enzyme catalyses L-glutamate + O2 + H2O = H2O2 + 2-oxoglutarate + NH4(+). In terms of biological role, catalyzes an oxidative deamination of predominantly hydrophobic and aromatic L-amino acids, thus producing hydrogen peroxide that may contribute to the diverse toxic effects of this enzyme. Is highly active against L-Tyr, L-Asp, L-Phe, L-Glu, L-Trp, L-His, L-Gln, L-Ile, L-Met, L-Leu and moderately active against L-Lys, L-Arg, L-Ala and L-Asn. Exhibits diverse biological activities, such as edema, inflammatory cell infiltration, cytotoxicity and apoptosis, as well as induction of platelet aggregation. Effects of snake L-amino oxidases on platelets are controversial, since they either induce aggregation or inhibit agonist-induced aggregation. These different effects are probably due to different experimental conditions. This protein may also induce hemorrhage, hemolysis, and have antibacterial and antiparasitic activities. This Bungarus fasciatus (Banded krait) protein is L-amino-acid oxidase.